We begin with the raw amino-acid sequence, 359 residues long: Stearoyl-CoA desaturase (359 aa).

Over 1-72 the chain is Cytoplasmic; sequence MPAHLLQDDI…EGPSPKVEYV (72 aa). The helical transmembrane segment at 73-93 threads the bilayer; the sequence is WRNIILMSLLHLGALYGITLI. Asn-75 is a binding site for substrate. Topologically, residues 94–97 are lumenal; sequence PTCK. The chain crosses the membrane as a helical span at residues 98 to 118; sequence FYTWLWGVFYYFVSALGITAG. Topologically, residues 119-217 are cytoplasmic; the sequence is AHRLWSHRSY…EKLVMFQRRY (99 aa). Residues His-120 and His-125 each contribute to the Fe cation site. The short motif at 120-125 is the Histidine box-1 element; that stretch reads HRLWSH. 3 residues coordinate substrate: Asn-148, Arg-155, and Asp-156. Fe cation is bound by residues His-157, His-160, and His-161. The Histidine box-2 motif lies at 157-161; the sequence is HRAHH. 2 residues coordinate substrate: Arg-188 and Lys-189. Ser-198 and Ser-203 each carry phosphoserine. The helical transmembrane segment at 218–237 threads the bilayer; it reads YKPGLLMMCFILPTLVPWYF. The Lumenal segment spans residues 238 to 241; sequence WGET. The chain crosses the membrane as a helical span at residues 242–263; the sequence is FQNSVFVATFLRYAVVLNATWL. Trp-262 contributes to the substrate binding site. The Cytoplasmic segment spans residues 264-359; the sequence is VNSAAHLFGY…RTGDGNYKSG (96 aa). His-269, His-298, His-301, and His-302 together coordinate Fe cation. Residues 298–302 carry the Histidine box-3 motif; that stretch reads HNYHH.

It belongs to the fatty acid desaturase type 1 family. May self-associate and form homodimers. Fe(2+) is required as a cofactor. In terms of tissue distribution, detected in fetal liver, lung and brain. Highly expressed in adult adipose tissue, and at lower levels in adult brain and lung.

The protein localises to the endoplasmic reticulum membrane. The enzyme catalyses octadecanoyl-CoA + 2 Fe(II)-[cytochrome b5] + O2 + 2 H(+) = (9Z)-octadecenoyl-CoA + 2 Fe(III)-[cytochrome b5] + 2 H2O. It carries out the reaction hexadecanoyl-CoA + 2 Fe(II)-[cytochrome b5] + O2 + 2 H(+) = (9Z)-hexadecenoyl-CoA + 2 Fe(III)-[cytochrome b5] + 2 H2O. Stearoyl-CoA desaturase that utilizes O(2) and electrons from reduced cytochrome b5 to introduce the first double bond into saturated fatty acyl-CoA substrates. Catalyzes the insertion of a cis double bond at the delta-9 position into fatty acyl-CoA substrates including palmitoyl-CoA and stearoyl-CoA. Gives rise to a mixture of 16:1 and 18:1 unsaturated fatty acids. Plays an important role in lipid biosynthesis. Plays an important role in regulating the expression of genes that are involved in lipogenesis and in regulating mitochondrial fatty acid oxidation. Plays an important role in body energy homeostasis. Contributes to the biosynthesis of membrane phospholipids, cholesterol esters and triglycerides. The sequence is that of Stearoyl-CoA desaturase (SCD) from Homo sapiens (Human).